Consider the following 445-residue polypeptide: MSLWLEASMPDVSPDSATELWKTEPQDAGDQGGNTCILREEARMPQSTGVALGIGLESAEPTALLPRAETLPEPTELRPQKRKKGPAPKMLGNELCSVCGDKASGFHYNVLSCEGCKGFFRRSVIKGARYVCHSGGHCPMDTYMRRKCQECRLRKCRQAGMREECVLSEEQIRLKKLKRQEEEQAQATSVSPRVSSPPQVLPQLSPEQLGMIEKLVAAQQQCNRRSFSDRLRVTPWPIAPDPQSREARQQRFAHFTELAIVSVQEIVDFAKQLPGFLQLSREDQIALLKTSAIEVMLLETSRRYNPGSESITFLKDFSYNREDFAKAGLQVEFINPIFEFSRAMNELQLNDAEFALLIAISIFSADRPNVQDQLQVERLQHTYVEALHAYVSINHPHDPLMFPRMLMKLVSLRTLSSVHSEQVFALRLQDKKLPPLLSEIWDVHE.

Disordered stretches follow at residues 1–34 (MSLWLEASMPDVSPDSATELWKTEPQDAGDQGGN) and 63–86 (ALLPRAETLPEPTELRPQKRKKGP). The segment at 1 to 94 (MSLWLEASMP…GPAPKMLGNE (94 aa)) is transactivation AF-1; required for ligand-independent transactivation function. The nuclear receptor DNA-binding region spans 93–168 (NELCSVCGDK…AGMREECVLS (76 aa)). 2 NR C4-type zinc fingers span residues 96–116 (CSVCGDKASGFHYNVLSCEGC) and 132–156 (CHSGGHCPMDTYMRRKCQECRLRKC). Phosphoserine is present on serine 191. Residues 203-445 (QLSPEQLGMI…LLSEIWDVHE (243 aa)) form a transactivation AF-2; required for ligand-dependent transactivation function; mediates interaction with CCAR2 region. The 239-residue stretch at 207–445 (EQLGMIEKLV…LLSEIWDVHE (239 aa)) folds into the NR LBD domain.

The protein belongs to the nuclear hormone receptor family. NR1 subfamily. As to quaternary structure, heterodimer of NR1H3 and RXR (retinoic acid receptor). Interacts with CCAR2 (via N-terminus) in a ligand-independent manner. Interacts with SIRT1 and this interaction is inhibited by CCAR2. Ubiquitinated. Ubiquitination by UBR5 leads to its degradation: UBR5 specifically recognizes and binds ligand-bound NR1H3 when it is not associated with coactivators (NCOAs). In presence of NCOAs, the UBR5-degron is not accessible, preventing its ubiquitination and degradation.

Its subcellular location is the nucleus. The protein resides in the cytoplasm. Nuclear receptor that exhibits a ligand-dependent transcriptional activation activity. Interaction with retinoic acid receptor (RXR) shifts RXR from its role as a silent DNA-binding partner to an active ligand-binding subunit in mediating retinoid responses through target genes defined by LXRES. LXRES are DR4-type response elements characterized by direct repeats of two similar hexanuclotide half-sites spaced by four nucleotides. Plays an important role in the regulation of cholesterol homeostasis, regulating cholesterol uptake through MYLIP-dependent ubiquitination of LDLR, VLDLR and LRP8. Interplays functionally with RORA for the regulation of genes involved in liver metabolism. Induces LPCAT3-dependent phospholipid remodeling in endoplasmic reticulum (ER) membranes of hepatocytes, driving SREBF1 processing and lipogenesis. Via LPCAT3, triggers the incorporation of arachidonate into phosphatidylcholines of ER membranes, increasing membrane dynamics and enabling triacylglycerols transfer to nascent very low-density lipoprotein (VLDL) particles. Via LPCAT3 also counteracts lipid-induced ER stress response and inflammation, likely by modulating SRC kinase membrane compartmentalization and limiting the synthesis of lipid inflammatory mediators. In Mus musculus (Mouse), this protein is Oxysterols receptor LXR-alpha (Nr1h3).